We begin with the raw amino-acid sequence, 800 residues long: Kolavenyl diphosphate synthase TPS5, chloroplastic (800 aa).

The transit peptide at 1–75 directs the protein to the chloroplast; that stretch reads MSLAYSQATS…VILTAEKSVD (75 aa). K244 serves as a coordination point for substrate. Mg(2+) contacts are provided by D375 and D377. The DXDD motif signature appears at 375–378; sequence DVDD. K461 lines the substrate pocket.

This sequence belongs to the terpene synthase family. Requires Mg(2+) as cofactor. In terms of tissue distribution, mostly expressed in trichomes of leaves and fruits.

The protein resides in the plastid. It is found in the chloroplast. The catalysed reaction is (2E,6E,10E)-geranylgeranyl diphosphate = (+)-kolavenyl diphosphate. It participates in secondary metabolite biosynthesis; terpenoid biosynthesis. In terms of biological role, involved in the biosynthesis of labdane-type diterpenoid including cleroda-dienols, and peregrinol lactones and furan derivatives, dopaminergic diterpenoids that can bind to dopamine receptors in the human pituitary gland, have probably ability to lower prolactin levels, and are used to treat menstrual cycle disorders (e.g. premenstrual syndrome and mastodynia). Terpene synthase that produces kolavenyl diphosphate from geranylgeranyl diphosphate (GGPP). This is Kolavenyl diphosphate synthase TPS5, chloroplastic from Vitex agnus-castus (Chaste tree).